Here is a 593-residue protein sequence, read N- to C-terminus: PiggyBac transposable element-derived protein 3 (593 aa).

Disordered stretches follow at residues 27 to 53 (IQPP…INNL) and 69 to 105 (SDAE…SRRR). The span at 38-47 (SDEESGDEEG) shows a compositional bias: acidic residues. Ser-86 carries the phosphoserine modification.

As to expression, expressed in heart and oocytes, but not in granulosa cells (at protein level).

It is found in the nucleus. Binds in vitro to PGBD3-related transposable elements, called MER85s; these non-autonomous 140 bp elements are characterized by the presence of PGBD3 terminal inverted repeats and the absence of internal transposase ORF. The protein is PiggyBac transposable element-derived protein 3 (PGBD3) of Homo sapiens (Human).